A 192-amino-acid chain; its full sequence is Adenylate kinase (192 aa).

11–16 (GSGKGT) is a binding site for ATP. Residues 31 to 60 (STGDIFRANVKGETPLGIEAKKYMDNGDFV) form an NMP region. AMP contacts are provided by residues threonine 32, arginine 37, 58 to 60 (DFV), 86 to 89 (GYPR), and glutamine 93. The interval 127–137 (GRAKETGRSDD) is LID. Position 128 (arginine 128) interacts with ATP. Positions 134 and 145 each coordinate AMP. An ATP-binding site is contributed by glycine 173.

Belongs to the adenylate kinase family. As to quaternary structure, monomer.

The protein localises to the cytoplasm. The catalysed reaction is AMP + ATP = 2 ADP. Its pathway is purine metabolism; AMP biosynthesis via salvage pathway; AMP from ADP: step 1/1. Catalyzes the reversible transfer of the terminal phosphate group between ATP and AMP. Plays an important role in cellular energy homeostasis and in adenine nucleotide metabolism. This Pseudarthrobacter chlorophenolicus (strain ATCC 700700 / DSM 12829 / CIP 107037 / JCM 12360 / KCTC 9906 / NCIMB 13794 / A6) (Arthrobacter chlorophenolicus) protein is Adenylate kinase.